The following is a 642-amino-acid chain: Sterol O-acyltransferase 2 (642 aa).

Positions 174–194 (KSSPDAVDSVGKNDGAAPTTV) are disordered. 2 positions are modified to phosphoserine: serine 175 and serine 176. The next 5 membrane-spanning stretches (helical) occupy residues 215–235 (FSGL…KALI), 292–312 (TGWI…MYLT), 404–424 (ISAK…QIEY), 442–462 (IFGT…PVAM), and 485–505 (LLVD…YLIW). The short motif at 523-529 (FYGDWWN) is the FYXDWWN motif element. Transmembrane regions (helical) follow at residues 567 to 587 (ATLM…YVIF) and 622 to 642 (VIFW…YLTF). Histidine 579 is a catalytic residue.

It belongs to the membrane-bound acyltransferase family. Sterol o-acyltransferase subfamily.

The protein resides in the endoplasmic reticulum membrane. The enzyme catalyses ergosterol + an acyl-CoA = ergosteryl ester + CoA. It carries out the reaction zymosterol + an acyl-CoA = zymosterol ester + CoA. Functionally, sterol O-acyltransferase that catalyzes the formation of stery esters. The chain is Sterol O-acyltransferase 2 from Saccharomyces cerevisiae (strain ATCC 204508 / S288c) (Baker's yeast).